The chain runs to 258 residues: Chaperone protein FaeE (258 aa).

The first 34 residues, 1–34, serve as a signal peptide directing secretion; that stretch reads MSKRNAVTTFFTNRVTKALGMTLALMMTCQSAMA. A disordered region spans residues 239–258; that stretch reads KKPAAPEAAKAEKADTAEQK. Residues 247 to 258 are compositionally biased toward basic and acidic residues; the sequence is AKAEKADTAEQK.

Belongs to the periplasmic pilus chaperone family.

It localises to the periplasm. Functionally, mediates assembly of pili by forming soluble multimeric complexes with pili subunits as an intermediate step in the assembly process. This protein is involved in K88 pili assembly. Protects pilin protein from proteolytic degradation by DegP and from premature polymerization. This Escherichia coli protein is Chaperone protein FaeE (faeE).